Consider the following 480-residue polypeptide: Molybdate-anion transporter (480 aa).

The next 12 helical transmembrane spans lie at 1-21 (MFVT…GLEL), 44-63 (ATFL…QGPY), 78-98 (IAIL…FSGW), 129-149 (FVLI…TTTF), 177-197 (TWNH…AEWL), 199-219 (LGPV…AWFV), 274-294 (VMLL…FIFL), 304-324 (SPLG…SLLF), 339-359 (VLCV…FSTV), 369-389 (FLAF…LNFL), 401-421 (SVLA…LLAL), and 441-461 (FGGC…LFTL).

The protein belongs to the major facilitator superfamily.

Its subcellular location is the cell membrane. In terms of biological role, mediates high-affinity intracellular uptake of the rare oligo-element molybdenum. In Takifugu rubripes (Japanese pufferfish), this protein is Molybdate-anion transporter (mfsd5).